Reading from the N-terminus, the 477-residue chain is Mannitol 2-dehydrogenase (477 aa).

19 to 30 serves as a coordination point for NAD(+); the sequence is IVHIGVGNFHRA.

The protein belongs to the mannitol dehydrogenase family. Monomer.

It carries out the reaction D-mannitol + NAD(+) = D-fructose + NADH + H(+). The polypeptide is Mannitol 2-dehydrogenase (mtlK) (Cereibacter sphaeroides (Rhodobacter sphaeroides)).